The following is a 122-amino-acid chain: 5'-AMP-activated protein kinase subunit beta-1 (122 aa).

Residues Ser-5, Ser-61, Ser-66, and Ser-73 each carry the phosphoserine modification. Positions 33 to 122 (EVNDKASAQA…TVNNIIQVKK (90 aa)) are glycogen-binding domain. Thr-113 carries the post-translational modification Phosphothreonine.

It belongs to the 5'-AMP-activated protein kinase beta subunit family. As to quaternary structure, AMPK is a heterotrimer of an alpha catalytic subunit (PRKAA1 or PRKAA2), a beta (PRKAB1 or PRKAB2) and a gamma non-catalytic subunits (PRKAG1, PRKAG2 or PRKAG3). Interacts with FNIP1 and FNIP2. In terms of processing, phosphorylated when associated with the catalytic subunit (PRKAA1 or PRKAA2). Phosphorylated by ULK1; leading to negatively regulate AMPK activity and suggesting the existence of a regulatory feedback loop between ULK1 and AMPK.

Non-catalytic subunit of AMP-activated protein kinase (AMPK), an energy sensor protein kinase that plays a key role in regulating cellular energy metabolism. In response to reduction of intracellular ATP levels, AMPK activates energy-producing pathways and inhibits energy-consuming processes: inhibits protein, carbohydrate and lipid biosynthesis, as well as cell growth and proliferation. AMPK acts via direct phosphorylation of metabolic enzymes, and by longer-term effects via phosphorylation of transcription regulators. Also acts as a regulator of cellular polarity by remodeling the actin cytoskeleton; probably by indirectly activating myosin. Beta non-catalytic subunit acts as a scaffold on which the AMPK complex assembles, via its C-terminus that bridges alpha (PRKAA1 or PRKAA2) and gamma subunits (PRKAG1, PRKAG2 or PRKAG3). In Sus scrofa (Pig), this protein is 5'-AMP-activated protein kinase subunit beta-1 (PRKAB1).